The chain runs to 283 residues: Pyridoxal kinase PdxY (283 aa).

Residue serine 8 coordinates substrate. Residues aspartate 110 and glutamate 147 each coordinate ATP. Substrate is bound at residue aspartate 219.

It belongs to the pyridoxine kinase family. PdxY subfamily. Homodimer. Mg(2+) serves as cofactor.

The catalysed reaction is pyridoxal + ATP = pyridoxal 5'-phosphate + ADP + H(+). The protein operates within cofactor metabolism; pyridoxal 5'-phosphate salvage; pyridoxal 5'-phosphate from pyridoxal: step 1/1. Functionally, pyridoxal kinase involved in the salvage pathway of pyridoxal 5'-phosphate (PLP). Catalyzes the phosphorylation of pyridoxal to PLP. The chain is Pyridoxal kinase PdxY from Leifsonia xyli subsp. xyli (strain CTCB07).